A 213-amino-acid chain; its full sequence is Nucleoside triphosphate pyrophosphatase (213 aa).

The active-site Proton acceptor is the aspartate 79.

Belongs to the Maf family. It depends on a divalent metal cation as a cofactor.

The protein resides in the cytoplasm. The catalysed reaction is a ribonucleoside 5'-triphosphate + H2O = a ribonucleoside 5'-phosphate + diphosphate + H(+). It carries out the reaction a 2'-deoxyribonucleoside 5'-triphosphate + H2O = a 2'-deoxyribonucleoside 5'-phosphate + diphosphate + H(+). Its function is as follows. Nucleoside triphosphate pyrophosphatase. May have a dual role in cell division arrest and in preventing the incorporation of modified nucleotides into cellular nucleic acids. In Rhodococcus erythropolis (strain PR4 / NBRC 100887), this protein is Nucleoside triphosphate pyrophosphatase.